Reading from the N-terminus, the 103-residue chain is Large ribosomal subunit protein bL21 (103 aa).

This sequence belongs to the bacterial ribosomal protein bL21 family. As to quaternary structure, part of the 50S ribosomal subunit. Contacts protein L20.

This protein binds to 23S rRNA in the presence of protein L20. This is Large ribosomal subunit protein bL21 from Chromohalobacter salexigens (strain ATCC BAA-138 / DSM 3043 / CIP 106854 / NCIMB 13768 / 1H11).